A 195-amino-acid chain; its full sequence is Phosphoheptose isomerase (195 aa).

The 160-residue stretch at 36–195 (LAHCLLSDGK…DLVDHQLFGE (160 aa)) folds into the SIS domain. 51-53 (NGG) provides a ligand contact to substrate. Zn(2+)-binding residues include histidine 60 and glutamate 64. Substrate contacts are provided by residues glutamate 64, 93 to 94 (ND), 119 to 121 (STS), serine 124, and glutamine 174. Zn(2+)-binding residues include glutamine 174 and histidine 182.

This sequence belongs to the SIS family. GmhA subfamily. In terms of assembly, homotetramer. Zn(2+) serves as cofactor.

The protein resides in the cytoplasm. It catalyses the reaction 2 D-sedoheptulose 7-phosphate = D-glycero-alpha-D-manno-heptose 7-phosphate + D-glycero-beta-D-manno-heptose 7-phosphate. The protein operates within carbohydrate biosynthesis; D-glycero-D-manno-heptose 7-phosphate biosynthesis; D-glycero-alpha-D-manno-heptose 7-phosphate and D-glycero-beta-D-manno-heptose 7-phosphate from sedoheptulose 7-phosphate: step 1/1. Its function is as follows. Catalyzes the isomerization of sedoheptulose 7-phosphate in D-glycero-D-manno-heptose 7-phosphate. The sequence is that of Phosphoheptose isomerase from Methylococcus capsulatus (strain ATCC 33009 / NCIMB 11132 / Bath).